We begin with the raw amino-acid sequence, 66 residues long: Large ribosomal subunit protein bL35 (66 aa).

The protein belongs to the bacterial ribosomal protein bL35 family.

This is Large ribosomal subunit protein bL35 from Thermomicrobium roseum (strain ATCC 27502 / DSM 5159 / P-2).